The primary structure comprises 805 residues: Leucine--tRNA ligase (805 aa).

Residues 40-51 carry the 'HIGH' region motif; that stretch reads PYPSGSGLHVGH. The short motif at 576–580 is the 'KMSKS' region element; the sequence is KMSKS. ATP is bound at residue Lys579.

Belongs to the class-I aminoacyl-tRNA synthetase family.

The protein localises to the cytoplasm. The catalysed reaction is tRNA(Leu) + L-leucine + ATP = L-leucyl-tRNA(Leu) + AMP + diphosphate. The protein is Leucine--tRNA ligase of Chloroherpeton thalassium (strain ATCC 35110 / GB-78).